The following is a 370-amino-acid chain: G-protein coupled receptor homolog K2 (370 aa).

The Extracellular portion of the chain corresponds to 1 to 61 (MTSPTNSTML…CTFLEDTKYH (61 aa)). N6 and N51 each carry an N-linked (GlcNAc...) asparagine; by host glycan. The chain crosses the membrane as a helical span at residues 62 to 82 (IIVIHIILFLLGSIGNIFVVS). Residues 83–94 (LIAFKRNKSITD) are Cytoplasmic-facing. The helical transmembrane segment at 95-115 (IYILNLSMSDCIFVFQIPFIV) threads the bilayer. The Extracellular segment spans residues 116–131 (YSKLDQWIFGNILCKI). A helical transmembrane segment spans residues 132–152 (MSVLYYVGFFSNMFIITLMSI). At 153–171 (DRYFAIVHPIKRQPYRTKR) the chain is on the cytoplasmic side. A helical transmembrane segment spans residues 172–192 (IGILMCCSAWLLSLILSSPVS). Residues 193-223 (KLYENIPHMSKDIYQCTLTNENDSIIAFIKR) are Extracellular-facing. Residues 224–244 (LMQIEITILGFLIPIIIFVYC) form a helical membrane-spanning segment. Over 245–265 (YYRIFTTVVRLRNRRKYKSIK) the chain is Cytoplasmic. Residues 266-286 (IVLMIVVCSLICWIPLYIVLM) traverse the membrane as a helical segment. The Extracellular segment spans residues 287-300 (IATIVSLYTSNIFR). The helical transmembrane segment at 301–321 (HLCLYLNLAYAITFSETISLA) threads the bilayer. Residues 322-370 (RCCINPIIYTLIGEHVRSRISSICSCIYRDNRIRKKLFSRKSSSSSNII) lie on the Cytoplasmic side of the membrane.

This sequence belongs to the G-protein coupled receptor 1 family.

It is found in the host cell membrane. In terms of biological role, putative chemokine receptor. The sequence is that of G-protein coupled receptor homolog K2 from Sus scrofa (Pig).